The sequence spans 261 residues: Ribosomal RNA small subunit methyltransferase J (261 aa).

Residues 101-102, 117-118, 153-154, and D176 each bind S-adenosyl-L-methionine; these read RD, ER, and SS.

The protein belongs to the methyltransferase superfamily. RsmJ family.

It is found in the cytoplasm. The enzyme catalyses guanosine(1516) in 16S rRNA + S-adenosyl-L-methionine = N(2)-methylguanosine(1516) in 16S rRNA + S-adenosyl-L-homocysteine + H(+). Its function is as follows. Specifically methylates the guanosine in position 1516 of 16S rRNA. The sequence is that of Ribosomal RNA small subunit methyltransferase J from Vibrio cholerae serotype O1 (strain ATCC 39315 / El Tor Inaba N16961).